Reading from the N-terminus, the 199-residue chain is RNA-binding protein, mRNA-processing factor 2a (199 aa).

Positions 20-97 constitute an RRM domain; sequence RTLFVSGLPV…QTLRLEFAKA (78 aa).

As to quaternary structure, interacts with Bucky ball (BUC); to mediate Balbiani body formation and oocyte polarity during early oogenesis.

The protein localises to the cytoplasm. Its subcellular location is the nucleus. It is found in the stress granule. In terms of biological role, RNA-binding protein involved in the regulation of smooth muscle cell differentiation and proliferation in the gastrointestinal system. RNA-binding protein localized in Balbiani body (electron-dense aggregates in the oocyte) and germ plasm during oogenesis, and may be required to maintain germ plasm mRNA translational repression. Translational regulator during topographic map formation in the visual system. Establishes oocyte polarity through interaction with Bucky ball (BUC). Acts as a pre-mRNA alternative splicing regulator. Mediates ACTN1 and FLNB alternative splicing. Likely binds to mRNA tandem CAC trinucleotide or CA dinucleotide motifs. This is RNA-binding protein, mRNA-processing factor 2a from Danio rerio (Zebrafish).